Consider the following 143-residue polypeptide: Ribonuclease P protein component 2 (143 aa).

This sequence belongs to the eukaryotic/archaeal RNase P protein component 2 family. As to quaternary structure, consists of a catalytic RNA component and at least 4-5 protein subunits.

It is found in the cytoplasm. The catalysed reaction is Endonucleolytic cleavage of RNA, removing 5'-extranucleotides from tRNA precursor.. In terms of biological role, part of ribonuclease P, a protein complex that generates mature tRNA molecules by cleaving their 5'-ends. The chain is Ribonuclease P protein component 2 from Saccharolobus islandicus (strain Y.N.15.51 / Yellowstone #2) (Sulfolobus islandicus).